The primary structure comprises 119 residues: Ig heavy chain V region T601 (119 aa).

In terms of domain architecture, Ig-like spans 1–112 (EVKLLESGGG…GYFDVWGAGT (112 aa)).

This is Ig heavy chain V region T601 from Mus musculus (Mouse).